The primary structure comprises 201 residues: 3-isopropylmalate dehydratase small subunit (201 aa).

It belongs to the LeuD family. LeuD type 1 subfamily. In terms of assembly, heterodimer of LeuC and LeuD.

It catalyses the reaction (2R,3S)-3-isopropylmalate = (2S)-2-isopropylmalate. Its pathway is amino-acid biosynthesis; L-leucine biosynthesis; L-leucine from 3-methyl-2-oxobutanoate: step 2/4. Functionally, catalyzes the isomerization between 2-isopropylmalate and 3-isopropylmalate, via the formation of 2-isopropylmaleate. This chain is 3-isopropylmalate dehydratase small subunit, found in Shewanella sp. (strain ANA-3).